The primary structure comprises 426 residues: Glutamate-1-semialdehyde 2,1-aminomutase (426 aa).

Lysine 266 is subject to N6-(pyridoxal phosphate)lysine.

This sequence belongs to the class-III pyridoxal-phosphate-dependent aminotransferase family. HemL subfamily. Requires pyridoxal 5'-phosphate as cofactor.

Its subcellular location is the cytoplasm. The enzyme catalyses (S)-4-amino-5-oxopentanoate = 5-aminolevulinate. Its pathway is porphyrin-containing compound metabolism; protoporphyrin-IX biosynthesis; 5-aminolevulinate from L-glutamyl-tRNA(Glu): step 2/2. The polypeptide is Glutamate-1-semialdehyde 2,1-aminomutase (hemL) (Methanocaldococcus jannaschii (strain ATCC 43067 / DSM 2661 / JAL-1 / JCM 10045 / NBRC 100440) (Methanococcus jannaschii)).